Reading from the N-terminus, the 887-residue chain is ABC transporter A family member 10 (887 aa).

7 consecutive transmembrane segments (helical) span residues 38–58 (GIQY…VITL), 198–218 (YLYV…LLVT), 245–265 (IIIV…VVLY), 277–297 (VMLF…GIIL), 309–329 (AISS…QFYL), 335–355 (SSWL…EFLY), and 376–396 (ISFL…WYIT). The span at 443-469 (NNCNNNNTSPSSSSSSQSSPLNKPLLS) shows a compositional bias: low complexity. A disordered region spans residues 443–474 (NNCNNNNTSPSSSSSSQSSPLNKPLLSGDSDD). The 248-residue stretch at 481–728 (IRLVNLKKTY…FNLGYILTIV (248 aa)) folds into the ABC transporter domain. 519–526 (GQNGSGKT) provides a ligand contact to ATP. The segment covering 774 to 797 (NNNNNENNSNNSDGSSSSSDSSSS) has biased composition (low complexity). Residues 774 to 799 (NNNNNENNSNNSDGSSSSSDSSSSKD) are disordered.

It belongs to the ABC transporter superfamily. ABCA family.

It is found in the membrane. This chain is ABC transporter A family member 10 (abcA10), found in Dictyostelium discoideum (Social amoeba).